Here is a 356-residue protein sequence, read N- to C-terminus: Nicotinate-nucleotide--dimethylbenzimidazole phosphoribosyltransferase (356 aa).

E317 serves as the catalytic Proton acceptor.

The protein belongs to the CobT family. In terms of assembly, homodimer.

It carries out the reaction 5,6-dimethylbenzimidazole + nicotinate beta-D-ribonucleotide = alpha-ribazole 5'-phosphate + nicotinate + H(+). The protein operates within nucleoside biosynthesis; alpha-ribazole biosynthesis; alpha-ribazole from 5,6-dimethylbenzimidazole: step 1/2. Functionally, catalyzes the synthesis of alpha-ribazole-5'-phosphate from nicotinate mononucleotide (NAMN) and 5,6-dimethylbenzimidazole (DMB). The sequence is that of Nicotinate-nucleotide--dimethylbenzimidazole phosphoribosyltransferase from Salmonella dublin (strain CT_02021853).